The chain runs to 369 residues: 3-dehydroquinate synthase (369 aa).

NAD(+) is bound by residues 75-80 (DGEEHK), 109-113 (GVIGD), 133-134 (TT), Lys-146, Lys-155, and 173-176 (TLKT). Residues Glu-188, His-251, and His-268 each contribute to the Zn(2+) site.

This sequence belongs to the sugar phosphate cyclases superfamily. Dehydroquinate synthase family. Co(2+) serves as cofactor. It depends on Zn(2+) as a cofactor. The cofactor is NAD(+).

The protein resides in the cytoplasm. It catalyses the reaction 7-phospho-2-dehydro-3-deoxy-D-arabino-heptonate = 3-dehydroquinate + phosphate. It functions in the pathway metabolic intermediate biosynthesis; chorismate biosynthesis; chorismate from D-erythrose 4-phosphate and phosphoenolpyruvate: step 2/7. Functionally, catalyzes the conversion of 3-deoxy-D-arabino-heptulosonate 7-phosphate (DAHP) to dehydroquinate (DHQ). The polypeptide is 3-dehydroquinate synthase (Legionella pneumophila (strain Corby)).